A 249-amino-acid polypeptide reads, in one-letter code: MRILVSNDDGFHAEGIQVLATELRKIAEVIIVAPDRNRSAASSSLTLVEPLRPRHLDNGDYCVNGTPADCVHLALNGFLSGQVDLVVSGINAGCNMGDDTIYSGTLAAALEGRHLGLPAIAVSLDGRQHYETAARVVCDLIPKLQHQLLNPREIININVPDLPFEELKGYKVCRLGYRSSSVEVIKQRDPRDETIYWIGPSALPEDESEGTDFYAVKNGYVSITPIQADLTAYHSLLSLQNWLDQEFTK.

4 residues coordinate a divalent metal cation: Asp8, Asp9, Ser39, and Asn91.

It belongs to the SurE nucleotidase family. Requires a divalent metal cation as cofactor.

It is found in the cytoplasm. The enzyme catalyses a ribonucleoside 5'-phosphate + H2O = a ribonucleoside + phosphate. Its function is as follows. Nucleotidase that shows phosphatase activity on nucleoside 5'-monophosphates. The chain is 5'-nucleotidase SurE from Haemophilus influenzae (strain ATCC 51907 / DSM 11121 / KW20 / Rd).